Here is a 161-residue protein sequence, read N- to C-terminus: Allophycocyanin alpha chain (161 aa).

Asn-71 is modified (N4-methylasparagine). (2R,3E)-phycocyanobilin is bound at residue Cys-81.

It belongs to the phycobiliprotein family. In terms of assembly, heterodimer of an alpha and a beta chain. In terms of processing, contains one covalently linked phycocyanobilin chromophore.

The protein resides in the plastid. It localises to the chloroplast thylakoid membrane. Functionally, light-harvesting photosynthetic bile pigment-protein from the phycobiliprotein complex. Allophycocyanin has a maximum absorption at approximately 650 nanometers. This is Allophycocyanin alpha chain (apcA) from Pyropia haitanensis (Red seaweed).